Here is a 217-residue protein sequence, read N- to C-terminus: Putative N-acetylmuramoyl-L-alanine amidase (217 aa).

The MurNAc-LAA domain maps to 3–206 (IAIDAGHGGQ…ISKSISIALK (204 aa)).

This sequence belongs to the N-acetylmuramoyl-L-alanine amidase 3 family.

It is found in the secreted. It catalyses the reaction Hydrolyzes the link between N-acetylmuramoyl residues and L-amino acid residues in certain cell-wall glycopeptides.. Its function is as follows. Cell-wall hydrolase involved in septum cleavage during cell division. The protein is Putative N-acetylmuramoyl-L-alanine amidase (amiB) of Buchnera aphidicola subsp. Baizongia pistaciae (strain Bp).